Reading from the N-terminus, the 364-residue chain is MEPKCDHCATSQALIYCKSDLAKLCLNCDVHVHSANPLSHRHIRSLICEKCFSQPAAIRCLDEKVSYCQGCHWHESNCSELGHRVQSLNPFSGCPSPTDFNRMWSSILEPPVSGLLSPFVGSFPLNDLNNTMFDTAYSMVPHNISYTQNFSDNLSFFSTESKGYPDMVLKLEEGEEDLCEGLNLDDAPLNFDVGDDIIGCSSEVHIEPDHTVPNCLLIDKTNTSSFTGSNFTVDKALEASPPGQQMNINTGLQLPLSPVLFGQIHPSLNITGENNAADYQDCGMSPGFIMSEAPWETNFEVSCPQARNEAKLRYKEKKLKRSFGKQIRYASRKARADTRKRVKGRFVKAGDSYDYDPSSPTTNN.

Zn(2+) is bound by residues Cys-5, Cys-8, Cys-28, and His-33. The segment at 5–47 (CDHCATSQALIYCKSDLAKLCLNCDVHVHSANPLSHRHIRSLI) adopts a B box-type 1; atypical zinc-finger fold. The segment at 48–88 (CEKCFSQPAAIRCLDEKVSYCQGCHWHESNCSELGHRVQSL) adopts a B box-type 2; degenerate zinc-finger fold. Positions 280–322 (QDCGMSPGFIMSEAPWETNFEVSCPQARNEAKLRYKEKKLKRS) constitute a CCT domain.

This sequence belongs to the CONSTANS family.

Its subcellular location is the nucleus. In Arabidopsis thaliana (Mouse-ear cress), this protein is Zinc finger protein CONSTANS-LIKE 12 (COL12).